The sequence spans 350 residues: Thymidine kinase (350 aa).

ATP is bound at residue 15-22 (GAHGLGKT). Glu-44 acts as the Proton acceptor in catalysis. Gln-88 serves as a coordination point for substrate. Arg-178 contributes to the ATP binding site. Residue Arg-184 coordinates substrate.

Belongs to the herpesviridae thymidine kinase family. Homodimer.

It catalyses the reaction thymidine + ATP = dTMP + ADP + H(+). Catalyzes the transfer of the gamma-phospho group of ATP to thymidine to generate dTMP in the salvage pathway of pyrimidine synthesis. The dTMP serves as a substrate for DNA polymerase during viral DNA replication. Allows the virus to be reactivated and to grow in non-proliferative cells lacking a high concentration of phosphorylated nucleic acid precursors. The chain is Thymidine kinase from Bos taurus (Bovine).